Consider the following 494-residue polypeptide: Flagellin A (494 aa).

The protein belongs to the bacterial flagellin family. As to quaternary structure, heteromer of FlaA and FlaB. FlaB is located proximal to the hook while the remainder of the filament is composed of the predominant FlaA.

It localises to the secreted. It is found in the bacterial flagellum. Functionally, flagellin is the subunit protein which polymerizes to form the filaments of bacterial flagella. Important for motility and virulence. This is Flagellin A (flaA) from Helicobacter mustelae.